The chain runs to 948 residues: Protocadherin alpha-10 (948 aa).

Residues 1 to 28 (MVSRCSCLGVQCLLLSLLLLAAWEVGSG) form the signal peptide. 6 Cadherin domains span residues 29–132 (QLHY…PPRF), 133–241 (SVTE…APIF), 242–349 (DRPV…SPEV), 350–454 (IVTS…APAF), 455–564 (AQPE…APAL), and 587–689 (GHVV…APEV). Residues 29–695 (QLHYSVYEEA…APEVALVDVN (667 aa)) are Extracellular-facing. N-linked (GlcNAc...) asparagine glycosylation is found at N256 and N264. Residue N547 is glycosylated (N-linked (GlcNAc...) asparagine). A helical membrane pass occupies residues 696–716 (VYLIIAICAVSSLLVLTLLLY). Over 717-948 (TALRCSAAPT…GNSTTDNSDQ (232 aa)) the chain is Cytoplasmic. PXXP repeat units follow at residues 732 to 735 (PVKP), 772 to 775 (PSLP), 797 to 800 (PRQP), 830 to 833 (PGGP), 871 to 874 (PGNP), and 889 to 892 (PGSP). Residues 732–892 (PVKPTLVCSS…PDKFIIPGSP (161 aa)) are 6 X 4 AA repeats of P-X-X-P. Disordered regions lie at residues 783–804 (DGEDQSIGGDHSRKPRQPNPDW) and 827–948 (RAGP…NSDQ). Residues 907–921 (DKSDFITFGKKEETK) are compositionally biased toward basic and acidic residues.

It localises to the cell membrane. In terms of biological role, potential calcium-dependent cell-adhesion protein. May be involved in the establishment and maintenance of specific neuronal connections in the brain. The sequence is that of Protocadherin alpha-10 (PCDHA10) from Pan troglodytes (Chimpanzee).